Consider the following 999-residue polypeptide: Bifunctional glutamine synthetase adenylyltransferase/adenylyl-removing enzyme (999 aa).

The segment at 1–483 (MTPGRRSSTF…LHEKLFYRPL (483 aa)) is adenylyl removase. The interval 489-999 (QLAPGEARLS…RTVVEDLFYA (511 aa)) is adenylyl transferase.

This sequence belongs to the GlnE family. Mg(2+) serves as cofactor.

The enzyme catalyses [glutamine synthetase]-O(4)-(5'-adenylyl)-L-tyrosine + phosphate = [glutamine synthetase]-L-tyrosine + ADP. It carries out the reaction [glutamine synthetase]-L-tyrosine + ATP = [glutamine synthetase]-O(4)-(5'-adenylyl)-L-tyrosine + diphosphate. Adenylation and deadenylation of glutamate--ammonia ligase. Its function is as follows. Involved in the regulation of glutamine synthetase GlnA, a key enzyme in the process to assimilate ammonia. When cellular nitrogen levels are high, the C-terminal adenylyl transferase (AT) inactivates GlnA by covalent transfer of an adenylyl group from ATP to specific tyrosine residue of GlnA, thus reducing its activity. Conversely, when nitrogen levels are low, the N-terminal adenylyl removase (AR) activates GlnA by removing the adenylyl group by phosphorolysis, increasing its activity. The regulatory region of GlnE binds the signal transduction protein PII (GlnB) which indicates the nitrogen status of the cell. In Streptomyces coelicolor (strain ATCC BAA-471 / A3(2) / M145), this protein is Bifunctional glutamine synthetase adenylyltransferase/adenylyl-removing enzyme.